Here is a 93-residue protein sequence, read N- to C-terminus: MSIPNLSSVTQLLSIATGLVSTNNPVVVPVVTQILSVVSQLLSGTPASVVLPILQGLIPLLTNFPLILIQLLSVIAGLQGLPVPSSFSPDYKV.

A signal peptide spans 1 to 22 (MSIPNLSSVTQLLSIATGLVST). Asn5 carries N-linked (GlcNAc...) asparagine; by host glycosylation.

This is an uncharacterized protein from Invertebrate iridescent virus 6 (IIV-6).